Consider the following 91-residue polypeptide: Secretoglobin family 3A member 2 (91 aa).

An N-terminal signal peptide occupies residues 1 to 21; sequence MKLVSIFLLVTIGICGYSATA.

Belongs to the secretoglobin family. UGRP subfamily. Homodimer; disulfide-linked. Monomer. Interacts with APOA1. In terms of tissue distribution, highly expressed in lung where it localizes to epithelial cells of the trachea, bronchus and bronchioles (at protein level). Expressed in club cells of the bronchioles. Also detected in the anterior and posterior lobes of the pituitary gland where it may localize to gonadotropic cells (at protein level). Not detected in other tissues tested.

The protein resides in the secreted. Secreted cytokine-like protein. Binds to the scavenger receptor MARCO. Can also bind to pathogens including the Gram-positive bacterium L.monocytogenes, the Gram-negative bacterium P.aeruginosa, and yeast. Strongly inhibits phospholipase A2 (PLA2G1B) activity. Seems to have anti-inflammatory effects in respiratory epithelium. Also has anti-fibrotic activity in lung. May play a role in fetal lung development and maturation. Promotes branching morphogenesis during early stages of lung development. In the pituitary, may inhibit production of follicle-stimulating hormone (FSH) and luteinizing hormone (LH). The polypeptide is Secretoglobin family 3A member 2 (Scgb3a2) (Mus musculus (Mouse)).